The following is a 420-amino-acid chain: Tol-Pal system protein TolB (420 aa).

An N-terminal signal peptide occupies residues Met-1–Ala-21.

The protein belongs to the TolB family. As to quaternary structure, the Tol-Pal system is composed of five core proteins: the inner membrane proteins TolA, TolQ and TolR, the periplasmic protein TolB and the outer membrane protein Pal. They form a network linking the inner and outer membranes and the peptidoglycan layer.

Its subcellular location is the periplasm. Functionally, part of the Tol-Pal system, which plays a role in outer membrane invagination during cell division and is important for maintaining outer membrane integrity. This Wolbachia pipientis wMel protein is Tol-Pal system protein TolB.